Reading from the N-terminus, the 600-residue chain is Ligand-dependent nuclear receptor corepressor-like protein (600 aa).

3 disordered regions span residues 1-24 (MEKGTDRMAAAAPAPPAAASQCRS), 102-122 (SVIGSSQSTPTEELSSQGQSN), and 495-519 (DGTSENTEDSLDRKDNKQPRKKRGR). A compositionally biased stretch (polar residues) spans 104 to 122 (IGSSQSTPTEELSSQGQSN). One can recognise an HTH psq-type domain in the interval 514-566 (RKKRGRYRQYDHEIMEEAIAMVMSGKMSVSKAQGIYGVPHSTLEYKVKERSGT). The H-T-H motif DNA-binding region spans 542 to 562 (VSKAQGIYGVPHSTLEYKVKE). The segment at 581-600 (GLFNMTDSGTGSCKTSSKPV) is disordered. Residues 583 to 600 (FNMTDSGTGSCKTSSKPV) are compositionally biased toward polar residues.

Its subcellular location is the nucleus. Its function is as follows. May act as transcription activator that binds DNA elements with the sequence 5'-CCCTATCGATCGATCTCTACCT-3'. The chain is Ligand-dependent nuclear receptor corepressor-like protein (LCORL) from Gallus gallus (Chicken).